Consider the following 429-residue polypeptide: Asparagine--tRNA ligase (429 aa).

Belongs to the class-II aminoacyl-tRNA synthetase family.

Its subcellular location is the cytoplasm. The enzyme catalyses tRNA(Asn) + L-asparagine + ATP = L-asparaginyl-tRNA(Asn) + AMP + diphosphate + H(+). The polypeptide is Asparagine--tRNA ligase (Thermoplasma acidophilum (strain ATCC 25905 / DSM 1728 / JCM 9062 / NBRC 15155 / AMRC-C165)).